The primary structure comprises 236 residues: MNGLSLSATKVEGNLYATLDSFLGKAPRDMPTHVLRKFEDTVEVGSTTAFFVHQTTNGITSSDNAHTAIIMLADGTTSTLGEVSGNFSTDAGDVVIASAIAVASNSPQNAPPGVASATIIPEGSVNFNSGLTSSNVTQARINSVQQVTDSLGKNHGVFCRDIHVQRDDRHLAATKVIAVSGLTTDSRTQVVLSSYVLQRISATGTSVAFESGVHKDFVYNVLLTAYESHGCLATKA.

This is an uncharacterized protein from Micromonas pusilla (Picoplanktonic green alga).